Here is a 607-residue protein sequence, read N- to C-terminus: ATP-dependent DNA helicase II subunit 1 (607 aa).

One can recognise a Ku domain in the interval 241–452 (MDLGNDVRIG…IETMQRILRG (212 aa)). The 35-residue stretch at 570-604 (IKALKVSQLKDILRDRGLRVSGKKADLLDNLTNYV) folds into the SAP domain.

The protein belongs to the ku70 family. As to quaternary structure, heterodimer of pku70 and pku80.

It is found in the nucleus. The protein localises to the chromosome. It localises to the telomere. It carries out the reaction ATP + H2O = ADP + phosphate + H(+). Its function is as follows. Single-stranded DNA-dependent ATP-dependent helicase. Involved in non-homologous end joining (NHEJ) DNA double strand break repair. DNA-binding is sequence-independent but has a high affinity to nicks in double-stranded DNA and to the ends of duplex DNA. Binds to naturally occurring chromosomal ends, and therefore provides chromosomal end protection. Required also for telomere recombination to repair telomeric ends in the absence of telomerase. ku70, of the ku70/ku80 heterodimer, binds to the stem loop of tlc1, the RNA component of telomerase. Required for mating-type switching. Involved in telomere maintenance. Interacts with telomeric repeats and subtelomeric sequences thereby controlling telomere length and protecting against subtelomeric rearrangement. Maintains telomeric chromatin, which is involved in silencing the expression of genes located at the telomere. This Schizosaccharomyces pombe (strain 972 / ATCC 24843) (Fission yeast) protein is ATP-dependent DNA helicase II subunit 1 (pku70).